The chain runs to 314 residues: MDGIWIEVSVITKSEALEPISGIFYGLNCPNVAIEDPEDLLSRDQGPLTWDFADINILEHKGNAAVVKAYFSQDDKVEEIVEYVKEKLSEIKEFGIDIGEGTVEAKKMHEEDWANNWKQYYKPVKITDKIVVKPIWEEYEKNDEELIIELDPGMAFGTGTHETTRMCIQALDKYVKPDTTVFDVGCGSGILAIAAAKLGAKHVVGVDLDPVAVDSSKENISFNNLNNIEVLEGNLLDVVDGKADIVVANIIAEIICVLTEDVKKALNEGGLFITSGIIHDRVDMVTEKFAECGFEVIEINKDGEWNCIVAKAIN.

Positions 164, 185, 207, and 249 each coordinate S-adenosyl-L-methionine.

Belongs to the methyltransferase superfamily. PrmA family.

It is found in the cytoplasm. The catalysed reaction is L-lysyl-[protein] + 3 S-adenosyl-L-methionine = N(6),N(6),N(6)-trimethyl-L-lysyl-[protein] + 3 S-adenosyl-L-homocysteine + 3 H(+). In terms of biological role, methylates ribosomal protein L11. This chain is Ribosomal protein L11 methyltransferase, found in Clostridium beijerinckii (strain ATCC 51743 / NCIMB 8052) (Clostridium acetobutylicum).